The chain runs to 100 residues: Protein translation factor SUI1 homolog (100 aa).

The protein belongs to the SUI1 family.

The sequence is that of Protein translation factor SUI1 homolog from Thermoplasma volcanium (strain ATCC 51530 / DSM 4299 / JCM 9571 / NBRC 15438 / GSS1).